The following is a 481-amino-acid chain: Glutamyl-tRNA(Gln) amidotransferase subunit A (481 aa).

Active-site charge relay system residues include lysine 79 and serine 154. The interval 136-157 (SAFGATKNPRNPEHVPGGSSGG) is disordered. Catalysis depends on serine 178, which acts as the Acyl-ester intermediate.

Belongs to the amidase family. GatA subfamily. Heterotrimer of A, B and C subunits.

The enzyme catalyses L-glutamyl-tRNA(Gln) + L-glutamine + ATP + H2O = L-glutaminyl-tRNA(Gln) + L-glutamate + ADP + phosphate + H(+). Its function is as follows. Allows the formation of correctly charged Gln-tRNA(Gln) through the transamidation of misacylated Glu-tRNA(Gln) in organisms which lack glutaminyl-tRNA synthetase. The reaction takes place in the presence of glutamine and ATP through an activated gamma-phospho-Glu-tRNA(Gln). The chain is Glutamyl-tRNA(Gln) amidotransferase subunit A from Lachnospira eligens (strain ATCC 27750 / DSM 3376 / VPI C15-48 / C15-B4) (Eubacterium eligens).